A 177-amino-acid polypeptide reads, in one-letter code: ATP synthase subunit delta (177 aa).

It belongs to the ATPase delta chain family. As to quaternary structure, F-type ATPases have 2 components, F(1) - the catalytic core - and F(0) - the membrane proton channel. F(1) has five subunits: alpha(3), beta(3), gamma(1), delta(1), epsilon(1). F(0) has three main subunits: a(1), b(2) and c(10-14). The alpha and beta chains form an alternating ring which encloses part of the gamma chain. F(1) is attached to F(0) by a central stalk formed by the gamma and epsilon chains, while a peripheral stalk is formed by the delta and b chains.

Its subcellular location is the cell inner membrane. F(1)F(0) ATP synthase produces ATP from ADP in the presence of a proton or sodium gradient. F-type ATPases consist of two structural domains, F(1) containing the extramembraneous catalytic core and F(0) containing the membrane proton channel, linked together by a central stalk and a peripheral stalk. During catalysis, ATP synthesis in the catalytic domain of F(1) is coupled via a rotary mechanism of the central stalk subunits to proton translocation. Its function is as follows. This protein is part of the stalk that links CF(0) to CF(1). It either transmits conformational changes from CF(0) to CF(1) or is implicated in proton conduction. This is ATP synthase subunit delta from Aliivibrio fischeri (strain ATCC 700601 / ES114) (Vibrio fischeri).